The sequence spans 159 residues: Ribosomal RNA large subunit methyltransferase H (159 aa).

S-adenosyl-L-methionine-binding positions include leucine 76, glycine 108, and 127–132 (FSKMTF).

It belongs to the RNA methyltransferase RlmH family. Homodimer.

It localises to the cytoplasm. The enzyme catalyses pseudouridine(1915) in 23S rRNA + S-adenosyl-L-methionine = N(3)-methylpseudouridine(1915) in 23S rRNA + S-adenosyl-L-homocysteine + H(+). Specifically methylates the pseudouridine at position 1915 (m3Psi1915) in 23S rRNA. The sequence is that of Ribosomal RNA large subunit methyltransferase H from Bifidobacterium animalis subsp. lactis (strain AD011).